The chain runs to 984 residues: Probable serine/threonine-protein kinase ireA (984 aa).

Positions 1–26 (MTFSKTRNKIIFLLFLIIINIFNINA) are cleaved as a signal peptide. The Extracellular segment spans residues 27–436 (YIKDENEDDL…NDLLDSNKLK (410 aa)). 2 disordered regions span residues 70 to 91 (YSTS…EITK) and 137 to 157 (EDKS…DENK). Composition is skewed to low complexity over residues 82-91 (STSTSTEITK) and 141-150 (STSSTSTTSE). N-linked (GlcNAc...) asparagine glycosylation is present at N228. A disordered region spans residues 352 to 427 (SPPSNNNNNN…GANNNNNNNN (76 aa)). The span at 356–397 (NNNNNNNNNNNNNNNNNNNNNNNNNNNNNNNNNNKNNNNNNK) shows a compositional bias: low complexity. N398 is a glycosylation site (N-linked (GlcNAc...) asparagine). A helical transmembrane segment spans residues 437–457 (NYDIYLYSSIVILITSIIVFI). At 458–984 (RSKKNFNLIN…NDQYFVQYYY (527 aa)) the chain is on the cytoplasmic side. Positions 467–533 (NVNNNNNQNN…NDLIDEFIST (67 aa)) form a coiled coil. Residues 472-489 (NNQNNNQNSNQNNNINNK) are compositionally biased toward low complexity. A disordered region spans residues 472-518 (NNQNNNQNSNQNNNINNKKTPKKKKKKQKNKNNKNNNDEDDENEIEN). Residues 490–503 (KTPKKKKKKQKNKN) are compositionally biased toward basic residues. The segment covering 509–518 (DEDDENEIEN) has biased composition (acidic residues). One can recognise a Protein kinase domain in the interval 575 to 851 (IITNKILGTG…IGECINHPFF (277 aa)). Residues 581-589 (LGTGSCGTI) and K603 contribute to the ATP site. A compositionally biased stretch (polar residues) spans 667–676 (PTDSPSIQSS). Positions 667–692 (PTDSPSIQSSNNNGNGNNGNNNNNNQ) are disordered. Low complexity predominate over residues 677-691 (NNNGNGNNGNNNNNN). D722 serves as the catalytic Proton acceptor. A KEN domain is found at 854-984 (VHKKLSFLVA…NDQYFVQYYY (131 aa)).

Belongs to the protein kinase superfamily. Ser/Thr protein kinase family.

It is found in the membrane. It catalyses the reaction L-seryl-[protein] + ATP = O-phospho-L-seryl-[protein] + ADP + H(+). The enzyme catalyses L-threonyl-[protein] + ATP = O-phospho-L-threonyl-[protein] + ADP + H(+). The sequence is that of Probable serine/threonine-protein kinase ireA (ireA) from Dictyostelium discoideum (Social amoeba).